Consider the following 327-residue polypeptide: GMP reductase (327 aa).

C176 (thioimidate intermediate) is an active-site residue. 205–228 contributes to the NADP(+) binding site; sequence IIADGGIRTHGDIAKSIRFGASMV.

This sequence belongs to the IMPDH/GMPR family. GuaC type 2 subfamily.

It carries out the reaction IMP + NH4(+) + NADP(+) = GMP + NADPH + 2 H(+). Catalyzes the irreversible NADPH-dependent deamination of GMP to IMP. It functions in the conversion of nucleobase, nucleoside and nucleotide derivatives of G to A nucleotides, and in maintaining the intracellular balance of A and G nucleotides. In Streptococcus pyogenes serotype M5 (strain Manfredo), this protein is GMP reductase.